The chain runs to 132 residues: Small ribosomal subunit protein uS8 (132 aa).

Belongs to the universal ribosomal protein uS8 family. Part of the 30S ribosomal subunit. Contacts proteins S5 and S12.

Its function is as follows. One of the primary rRNA binding proteins, it binds directly to 16S rRNA central domain where it helps coordinate assembly of the platform of the 30S subunit. The sequence is that of Small ribosomal subunit protein uS8 from Caulobacter vibrioides (strain ATCC 19089 / CIP 103742 / CB 15) (Caulobacter crescentus).